Consider the following 382-residue polypeptide: Acetyltransferase eriL (382 aa).

The next 6 helical transmembrane spans lie at Leu5–Val25, Ala33–Gly53, Ile59–Asn79, Thr146–Phe166, Leu192–Val212, and Gly335–Phe355.

Belongs to the wax synthase family.

The protein resides in the membrane. The catalysed reaction is cyathatriol + acetyl-CoA = 11-O-acetylcyathatriol + CoA. It catalyses the reaction cyathin A3 + acetyl-CoA = 11-O-acetylcyathin A3 + CoA. The protein operates within secondary metabolite biosynthesis. In terms of biological role, acetyltransferase; part of the gene cluster that mediates the biosynthesis of erinacines, cyathane-xylosides that show unique biological activities, including leishmanicidal activity, stimulating activity for nerve growth-factor synthesis, and agonistic activity toward the kappa opioid receptor. Within the pathway, eriL converts cyathatriol into 11-O-acetyl-cyathatriol. EriL is also able to acetylate cyathin A3 to produce 11-O-acetylcyathin A3. The first step of the erinacines biosynthesis pathway is catalyzed by the geranylgeranyl diphosphate (GGPP) synthase eriE via conversion of farnesyl pyrophosphate and isopentyl pyrophosphate into geranylgeranyl pyrophosphate (GGPP). GGPP is then substrate of the diterpene cyclase eriG for the production of cyatha-3,12-diene. The cytochrome P450 monooxygenase eriI then hydroxylates cyatha-3,12-diene at C-14 of the seven-membered ring to produce erinacol, which is further hydroxylated at C-15 by the cytochrome P450 monooxygenase eriC to yield cyathadiol. The cytochrome P450 monooxygenase eriA then catalyzes C-11 hydroxylation in the presence of the short chain dehydrogenase/reductase (SDR) eriH, which leads to the production of cyathatriol. The acetyltransferase eriL converts cyathatriol into 11-O-acetyl-cyathatriol. The SDR eriH catalyzes further oxidation of 11-O-acetyl-cyathatriol into 1-O-acetylcyathin A3. Finally, the glycosyl transferase eriJ tranfers xylose from UDP-xylose onto C-14 of 11-O-acetyl-cyathatriol to form eracine Q. EriJ is also able to convert 11-O-acetyl-cyathatriol to eracine Q2 by using UDP-D-glucose as cosubstrate, but at a lower rate. This chain is Acetyltransferase eriL, found in Hericium erinaceus (Lion's mane mushroom).